The following is a 346-amino-acid chain: UDP-N-acetylenolpyruvoylglucosamine reductase (346 aa).

In terms of domain architecture, FAD-binding PCMH-type spans 17-187; sequence IESQAYALIE…VAVGFTLKKE (171 aa). Arg-163 is a catalytic residue. The active-site Proton donor is the Ser-233. Glu-329 is a catalytic residue.

This sequence belongs to the MurB family. FAD is required as a cofactor.

It localises to the cytoplasm. The catalysed reaction is UDP-N-acetyl-alpha-D-muramate + NADP(+) = UDP-N-acetyl-3-O-(1-carboxyvinyl)-alpha-D-glucosamine + NADPH + H(+). It functions in the pathway cell wall biogenesis; peptidoglycan biosynthesis. Cell wall formation. This is UDP-N-acetylenolpyruvoylglucosamine reductase from Photobacterium profundum (strain SS9).